The following is a 143-amino-acid chain: Actin-depolymerizing factor 2 (143 aa).

Residues 5 to 139 (ASGMAVHDDC…GLDVFRSRAG (135 aa)) enclose the ADF-H domain.

Belongs to the actin-binding proteins ADF family.

Actin-depolymerizing protein. Severs actin filaments (F-actin) and binds to actin monomers. This chain is Actin-depolymerizing factor 2 (ADF2), found in Petunia hybrida (Petunia).